The chain runs to 290 residues: 1D-myo-inositol 2-acetamido-2-deoxy-alpha-D-glucopyranoside deacetylase (290 aa).

Residues His17, Asp20, and His150 each coordinate Zn(2+).

It belongs to the MshB deacetylase family. The cofactor is Zn(2+).

It catalyses the reaction 1D-myo-inositol 2-acetamido-2-deoxy-alpha-D-glucopyranoside + H2O = 1D-myo-inositol 2-amino-2-deoxy-alpha-D-glucopyranoside + acetate. Catalyzes the deacetylation of 1D-myo-inositol 2-acetamido-2-deoxy-alpha-D-glucopyranoside (GlcNAc-Ins) in the mycothiol biosynthesis pathway. The polypeptide is 1D-myo-inositol 2-acetamido-2-deoxy-alpha-D-glucopyranoside deacetylase (Corynebacterium glutamicum (strain R)).